The following is a 428-amino-acid chain: 3-phosphoshikimate 1-carboxyvinyltransferase (428 aa).

The 3-phosphoshikimate site is built by lysine 21, serine 22, and arginine 26. Phosphoenolpyruvate is bound at residue lysine 21. The phosphoenolpyruvate site is built by glycine 91 and arginine 119. 3-phosphoshikimate-binding residues include serine 164, glutamine 166, aspartate 311, and lysine 338. Residue glutamine 166 participates in phosphoenolpyruvate binding. The active-site Proton acceptor is aspartate 311. Residues arginine 342 and arginine 383 each coordinate phosphoenolpyruvate.

It belongs to the EPSP synthase family. In terms of assembly, monomer.

It is found in the cytoplasm. It carries out the reaction 3-phosphoshikimate + phosphoenolpyruvate = 5-O-(1-carboxyvinyl)-3-phosphoshikimate + phosphate. It participates in metabolic intermediate biosynthesis; chorismate biosynthesis; chorismate from D-erythrose 4-phosphate and phosphoenolpyruvate: step 6/7. Functionally, catalyzes the transfer of the enolpyruvyl moiety of phosphoenolpyruvate (PEP) to the 5-hydroxyl of shikimate-3-phosphate (S3P) to produce enolpyruvyl shikimate-3-phosphate and inorganic phosphate. This Campylobacter concisus (strain 13826) protein is 3-phosphoshikimate 1-carboxyvinyltransferase.